A 160-amino-acid chain; its full sequence is MFRGKFETTIDVKGRTSLPAKFRDVLFETFGDERFFITNSNPVRLGEGVYSSGLVVYPYKEWLALEEKLMVGTGLGLSSAELAAVKRRIVAPAIECVADKLGRVLVPPHLRKSAVLEREILFVGMLNKAEIWSQAEWEKVCRQDEQNFPIDSPVLAELGL.

SpoVT-AbrB domains follow at residues 5 to 50 and 93 to 136; these read KFET…EGVY and AIEC…SQAE.

Belongs to the MraZ family. In terms of assembly, forms oligomers.

It localises to the cytoplasm. It is found in the nucleoid. In Geotalea uraniireducens (strain Rf4) (Geobacter uraniireducens), this protein is Transcriptional regulator MraZ.